We begin with the raw amino-acid sequence, 441 residues long: Cysteine--tRNA ligase (441 aa).

Cys-24 lines the Zn(2+) pocket. The 'HIGH' region signature appears at 26–36 (PTVYNYIHIGN). The Zn(2+) site is built by Cys-204, His-230, and Glu-234. The 'KMSKS' region signature appears at 262-266 (KMSKS). Lys-265 lines the ATP pocket.

It belongs to the class-I aminoacyl-tRNA synthetase family. Monomer. Zn(2+) serves as cofactor.

It localises to the cytoplasm. The catalysed reaction is tRNA(Cys) + L-cysteine + ATP = L-cysteinyl-tRNA(Cys) + AMP + diphosphate. The protein is Cysteine--tRNA ligase of Mycoplasma mycoides subsp. mycoides SC (strain CCUG 32753 / NCTC 10114 / PG1).